The chain runs to 353 residues: Photosystem II D2 protein (353 aa).

An N-acetylthreonine modification is found at Thr-2. Thr-2 is subject to Phosphothreonine. A helical membrane pass occupies residues 41 to 61 (CAYFALGGWFTGTTFVTSWYT). Position 118 (His-118) interacts with chlorophyll a. A helical transmembrane segment spans residues 125-141 (GFMLRQFELARSVQLRP). Pheophytin a contacts are provided by Gln-130 and Asn-143. A helical transmembrane segment spans residues 153-166 (VFVSVFLIYPLGQS). His-198 is a binding site for chlorophyll a. A helical membrane pass occupies residues 208-228 (AALLCAIHGATVENTLFEDGD). A plastoquinone is bound by residues His-215 and Phe-262. Fe cation is bound at residue His-215. Residue His-269 coordinates Fe cation. The helical transmembrane segment at 279-295 (GLWMSALGVVGLALNLR) threads the bilayer.

Belongs to the reaction center PufL/M/PsbA/D family. In terms of assembly, PSII is composed of 1 copy each of membrane proteins PsbA, PsbB, PsbC, PsbD, PsbE, PsbF, PsbH, PsbI, PsbJ, PsbK, PsbL, PsbM, PsbT, PsbX, PsbY, PsbZ, Psb30/Ycf12, at least 3 peripheral proteins of the oxygen-evolving complex and a large number of cofactors. It forms dimeric complexes. Requires The D1/D2 heterodimer binds P680, chlorophylls that are the primary electron donor of PSII, and subsequent electron acceptors. It shares a non-heme iron and each subunit binds pheophytin, quinone, additional chlorophylls, carotenoids and lipids. There is also a Cl(-1) ion associated with D1 and D2, which is required for oxygen evolution. The PSII complex binds additional chlorophylls, carotenoids and specific lipids. as cofactor.

Its subcellular location is the plastid. It is found in the chloroplast thylakoid membrane. The catalysed reaction is 2 a plastoquinone + 4 hnu + 2 H2O = 2 a plastoquinol + O2. Functionally, photosystem II (PSII) is a light-driven water:plastoquinone oxidoreductase that uses light energy to abstract electrons from H(2)O, generating O(2) and a proton gradient subsequently used for ATP formation. It consists of a core antenna complex that captures photons, and an electron transfer chain that converts photonic excitation into a charge separation. The D1/D2 (PsbA/PsbD) reaction center heterodimer binds P680, the primary electron donor of PSII as well as several subsequent electron acceptors. D2 is needed for assembly of a stable PSII complex. The chain is Photosystem II D2 protein from Populus trichocarpa (Western balsam poplar).